Consider the following 89-residue polypeptide: Small ribosomal subunit protein uS15 (89 aa).

Belongs to the universal ribosomal protein uS15 family. In terms of assembly, part of the 30S ribosomal subunit. Forms a bridge to the 50S subunit in the 70S ribosome, contacting the 23S rRNA.

Its function is as follows. One of the primary rRNA binding proteins, it binds directly to 16S rRNA where it helps nucleate assembly of the platform of the 30S subunit by binding and bridging several RNA helices of the 16S rRNA. In terms of biological role, forms an intersubunit bridge (bridge B4) with the 23S rRNA of the 50S subunit in the ribosome. This chain is Small ribosomal subunit protein uS15, found in Shewanella denitrificans (strain OS217 / ATCC BAA-1090 / DSM 15013).